A 556-amino-acid chain; its full sequence is MSKIADDQNFNDEEENFAKLFKKELEKEETLEKGTIKEGLVVSINENDGYAMVSVGGKTEGRLALNEITDEKGQLLYQKNDPIIVHVSEKGEHPSVSYKKAISQQKIQAKIEELGENYENAIIEGKIVGKNKGGYIVESQGVEYFLSRSHSSLKNDANHIGKRVKACIIRVDKENHSINISRKRFFEVNDKRQLEVSKELLEATEPVLGVVRQITPFGIFVEAKGIEGLVHYSEISHKGPVNPEKYYKEGDEVYVKAIAYDAEKRRLSLSIKATIEDPWEEIQDKLKPGYAIKVVVSNIEHYGVFVDIGNDIEGFLHVSEISWDKNVSHPNNYLSVGQEIDVKIIDIDPKNRRLRVSLKQLTNRPFDVFESKHQVGDVLEGKVATLTDFGAFLNLGGVDGLLHNHDAFWDKDKKCKDHYKIGDVIKVKILKINKKDKKISLSAKHLVTSPTEEFAQKHKTDSVIQGKVVSIKDFGVFINADGIDVLIKNEDLNPLKKDEIKIGQEITCVVVAIEKSNNKVRASVHRLERKKEKEELQAFNTSDDKMTLGDILKEKL.

S1 motif domains follow at residues 35–105 (TIKE…ISQQ), 120–183 (NAII…ISRK), 204–272 (TEPV…LSIK), 289–359 (GYAI…VSLK), 377–444 (DVLE…LSAK), and 461–525 (DSVI…ASVH).

The protein belongs to the bacterial ribosomal protein bS1 family.

Binds mRNA; thus facilitating recognition of the initiation point. It is needed to translate mRNA with a short Shine-Dalgarno (SD) purine-rich sequence. This chain is Small ribosomal subunit protein bS1 (rpsA), found in Helicobacter pylori (strain ATCC 700392 / 26695) (Campylobacter pylori).